The primary structure comprises 88 residues: Large ribosomal subunit protein bL31B (88 aa).

Belongs to the bacterial ribosomal protein bL31 family. Type B subfamily. In terms of assembly, part of the 50S ribosomal subunit.

The chain is Large ribosomal subunit protein bL31B from Glaesserella parasuis serovar 5 (strain SH0165) (Haemophilus parasuis).